The following is an 86-amino-acid chain: Tryptophan-containing weak neurotoxin (86 aa).

The signal sequence occupies residues 1 to 21 (MKTLLLTLVVVTIVCLDLGYT). Intrachain disulfides connect C24–C45, C27–C32, C38–C63, C67–C78, and C79–C84.

This sequence belongs to the three-finger toxin family. Ancestral subfamily. Orphan group II sub-subfamily. In terms of assembly, monomer in solution. In terms of processing, the disulfide bond Cys-27-Cys-32 is probably not needed for efficient interaction of the toxin with the target receptor (Torpedo muscle or alpha-7/CHRNA7 nAChR). As to expression, expressed by the venom gland.

The protein localises to the secreted. In terms of biological role, neurotoxin that irreversibly inhibits nicotinic acetylcholine receptors (nAChR) and allosterically interacts with muscarinic acetylcholine receptors (mAChR). The loop II is involved in the interaction of this toxin with nAChR and mAChR. On nAChR, it acts as a competitive antagonist (muscle-type and alpha-7/CHRNA7) with IC(50) values in the micromolar range. On mAChR, in presence of ACh, it partially inhibits the effect of acetylcholine (ACh) (allosteric antagonist), whereas in the absence of ACh, it activates the receptor (allosteric agonist). It also shows a very weak inhibition of GABA(A) receptor composed of alpha-1-beta-3-gamma-2 (GABRA1 and GABRB3 and GABRG2) subunits (10 uM inhibit 31% current). In vivo, is nonlethal to mice at concentrations up to 20 mg/kg, but exerts a myorelaxant effect, induces a dose-dependent decrease in blood pressure and an increase in heart rate in mice and rats. This chain is Tryptophan-containing weak neurotoxin, found in Naja kaouthia (Monocled cobra).